Consider the following 1338-residue polypeptide: Nonribosomal peptide synthetase astA (1338 aa).

A disordered region spans residues 22 to 52 (IAVVSGDIPSPHPKNEPSQTSTLHIPRDSDL). The tract at residues 271–681 (FQARCRQNPS…GRKGAEVKLR (411 aa)) is adenylation. The Carrier domain occupies 820-893 (TPVEIIIHDA…SLAEKCSAGG (74 aa)). Ser854 is modified (O-(pantetheine 4'-phosphoryl)serine). The segment at 949-1336 (TFIFRLSGPV…IIRFLDSPDS (388 aa)) is condensation.

It belongs to the NRP synthetase family.

The enzyme catalyses 7beta,14,16-trihydroxyconfertifolin + benzoate + H(+) = dideacetyl astellolide A + H2O. It catalyses the reaction 7beta,14,16-trihydroxyconfertifolin + 4-hydroxybenzoate + H(+) = dideacetyl astellolide B + H2O. It participates in secondary metabolite biosynthesis; terpenoid biosynthesis. Its function is as follows. Nonribosomal peptide synthetase; part of the gene cluster that mediates the biosynthesis of astellolides, drimane-type sesquiterpene esters that show antimicrobial, anti-inflammatory, and anti-tumor activities. The first step in astellolide biosynthesis is performed by the sesquiterpene cyclase astC that catalyzes the formation of drimanyl pyrophosphate from farnesyl pyrophosphate. Drimanyl pyrophosphate is then dephosphorylated by the sesquiterpene phosphatase astI to produce drimanyl monophosphate which is further dephosphorylated to drim-8-ene-11-ol by atsK. Drim-8-ene-11-ol is converted to confertifolin, probably by the cytochrome P450 monooxygenase astD and/or the dehydrogenase astE. The cytochrome P450 monooxygenases astB, astF and astJ then hydroxylate confertifolin at C6, C14, or C15 to form trihydroxy confertifolin. The nonribosomal peptide synthetase astA catalyzes ester bond formation between trihydroxy contifolin and benzoic acid (BA) or 4-hydroxy benzoic acid (4HBA), leading to the formation of dideacetyl astellolides A and B, respectively. Finally, the O-acetyltransferase astG converts dideacetyl astellolides A and B into deacetyl astellolides A and B. The sequence is that of Nonribosomal peptide synthetase astA from Aspergillus oryzae (strain ATCC 42149 / RIB 40) (Yellow koji mold).